We begin with the raw amino-acid sequence, 571 residues long: Sulfite reductase [NADPH] hemoprotein beta-component (571 aa).

Residues Cys436, Cys442, Cys481, and Cys485 each coordinate [4Fe-4S] cluster. A siroheme-binding site is contributed by Cys485.

The protein belongs to the nitrite and sulfite reductase 4Fe-4S domain family. As to quaternary structure, alpha(8)-beta(8). The alpha component is a flavoprotein, the beta component is a hemoprotein. It depends on siroheme as a cofactor. [4Fe-4S] cluster serves as cofactor.

It carries out the reaction hydrogen sulfide + 3 NADP(+) + 3 H2O = sulfite + 3 NADPH + 4 H(+). It functions in the pathway sulfur metabolism; hydrogen sulfide biosynthesis; hydrogen sulfide from sulfite (NADPH route): step 1/1. Its function is as follows. Component of the sulfite reductase complex that catalyzes the 6-electron reduction of sulfite to sulfide. This is one of several activities required for the biosynthesis of L-cysteine from sulfate. The sequence is that of Sulfite reductase [NADPH] hemoprotein beta-component (cysI) from Bacillus subtilis (strain 168).